A 121-amino-acid chain; its full sequence is Large ribosomal subunit protein uL14 (121 aa).

It belongs to the universal ribosomal protein uL14 family. As to quaternary structure, part of the 50S ribosomal subunit. Forms a cluster with proteins L3 and L19. In the 70S ribosome, L14 and L19 interact and together make contacts with the 16S rRNA in bridges B5 and B8.

Functionally, binds to 23S rRNA. Forms part of two intersubunit bridges in the 70S ribosome. The sequence is that of Large ribosomal subunit protein uL14 from Synechococcus sp. (strain CC9311).